The primary structure comprises 276 residues: Putative serine/threonine-protein kinase R436 (276 aa).

In terms of domain architecture, Protein kinase spans 6-266; sequence YSLDKLIQNR…IKQKLNHFKT (261 aa). ATP is bound by residues 12 to 20 and lysine 35; that span reads IQNRKSKRI. The active-site Proton acceptor is the aspartate 132.

This sequence belongs to the protein kinase superfamily. Ser/Thr protein kinase family.

It catalyses the reaction L-seryl-[protein] + ATP = O-phospho-L-seryl-[protein] + ADP + H(+). The enzyme catalyses L-threonyl-[protein] + ATP = O-phospho-L-threonyl-[protein] + ADP + H(+). The chain is Putative serine/threonine-protein kinase R436 from Acanthamoeba polyphaga (Amoeba).